Here is a 313-residue protein sequence, read N- to C-terminus: Probable inactive peptidyl-prolyl cis-trans isomerase-like 6 (313 aa).

A PPIase cyclophilin-type domain is found at 147–310; the sequence is YLDICIDLSP…LLCSIADSGV (164 aa).

This sequence belongs to the cyclophilin-type PPIase family.

In terms of biological role, probable inactive PPIase with no peptidyl-prolyl cis-trans isomerase activity. The polypeptide is Probable inactive peptidyl-prolyl cis-trans isomerase-like 6 (Mus musculus (Mouse)).